Consider the following 372-residue polypeptide: Glutamate 5-kinase (372 aa).

Position 14 (K14) interacts with ATP. 3 residues coordinate substrate: S55, D142, and N154. Residues 174-175 (SD) and 216-222 (TGGMETK) contribute to the ATP site. Residues 279 to 357 (QGSIIVDLGA…WEIADVLGHK (79 aa)) enclose the PUA domain.

The protein belongs to the glutamate 5-kinase family.

The protein resides in the cytoplasm. The enzyme catalyses L-glutamate + ATP = L-glutamyl 5-phosphate + ADP. It functions in the pathway amino-acid biosynthesis; L-proline biosynthesis; L-glutamate 5-semialdehyde from L-glutamate: step 1/2. Functionally, catalyzes the transfer of a phosphate group to glutamate to form L-glutamate 5-phosphate. The chain is Glutamate 5-kinase from Carboxydothermus hydrogenoformans (strain ATCC BAA-161 / DSM 6008 / Z-2901).